Here is a 131-residue protein sequence, read N- to C-terminus: MKMIAWMQHFLETDETKLIYWLTFLMVCMVVDTVLGVLFAKLNPNIKFSSFKIKTGVLIKVSEMILALLAIPFAVPFPAGLPLLYTVYTALCVSEIYSIFGHLRLVDDKSDFLEILENFFKRTSGKNKEEK.

Topologically, residues 1–14 (MKMIAWMQHFLETD) are periplasmic. Cytoplasmic loops occupy residues 1-52 (MKMI…SSFK) and 38-49 (LFAKLNPNIKFS). Residues 15 to 37 (ETKLIYWLTFLMVCMVVDTVLGV) form a helical membrane-spanning segment. The chain crosses the membrane as a helical span at residues 53-75 (IKTGVLIKVSEMILALLAIPFAV). Topologically, residues 76 to 78 (PFP) are periplasmic. A helical membrane pass occupies residues 79 to 101 (AGLPLLYTVYTALCVSEIYSIFG). Topologically, residues 102-131 (HLRLVDDKSDFLEILENFFKRTSGKNKEEK) are cytoplasmic.

The protein belongs to the bacteriophage holin family. phi29likevirus holin subfamily. As to quaternary structure, homomultimer. Interacts with isoform Antiholin; this interaction blocks the holin homomultimerization and delays host cell lysis.

It localises to the host cell inner membrane. Functionally, accumulates harmlessly in the cytoplasmic membrane until it reaches a critical concentration that triggers the formation of micron-scale pores (holes) causing host cell membrane disruption and endolysin escape into the periplasmic space. Determines the precise timing of host cell lysis. Participates with the endolysin and spanin proteins in the sequential events which lead to the programmed host cell lysis releasing the mature viral particles from the host cell. Counteracts the aggregation of the holin molecules and thus of pore formation. This is Antiholin (14) from Bacillus subtilis (Bacteriophage phi-29).